The following is a 593-amino-acid chain: Probable tripeptidyl-peptidase SED3 (593 aa).

An N-terminal signal peptide occupies residues 1 to 18 (MLLRWHSVIPLFLTMTVA). A propeptide spans 19–198 (LPNTYRTVVE…SLQVIYSSTN (180 aa)) (removed in mature form). Asn-198, Asn-204, Asn-261, and Asn-275 each carry an N-linked (GlcNAc...) asparagine glycan. A Peptidase S53 domain is found at 206–592 (TITPRCLREL…RILAKIVQHM (387 aa)). Residues Glu-282 and Asp-286 each act as charge relay system in the active site. The N-linked (GlcNAc...) asparagine glycan is linked to Asn-295. Catalysis depends on Ser-496, which acts as the Charge relay system. Ca(2+) contacts are provided by Asp-538 and Ile-539. N-linked (GlcNAc...) asparagine glycosylation is found at Asn-554 and Asn-566. Ca(2+) contacts are provided by Gly-570 and Asp-572.

It depends on Ca(2+) as a cofactor.

Its subcellular location is the secreted. The protein resides in the extracellular space. The enzyme catalyses Release of an N-terminal tripeptide from a polypeptide.. Functionally, secreted tripeptidyl-peptidase which degrades proteins at acidic pHs and is involved in virulence. This chain is Probable tripeptidyl-peptidase SED3 (SED3), found in Trichophyton verrucosum (strain HKI 0517).